The chain runs to 61 residues: Large ribosomal subunit protein eL37 (61 aa).

Positions 19, 22, 34, and 37 each coordinate Zn(2+). Residues 19-37 form a C4-type zinc finger; sequence CRRCGRNSFNVRKGYCAAC.

It belongs to the eukaryotic ribosomal protein eL37 family. Zn(2+) serves as cofactor.

Functionally, binds to the 23S rRNA. The chain is Large ribosomal subunit protein eL37 (rpl37e) from Sulfurisphaera tokodaii (strain DSM 16993 / JCM 10545 / NBRC 100140 / 7) (Sulfolobus tokodaii).